The primary structure comprises 447 residues: Gamma-glutamyl phosphate reductase (447 aa).

This sequence belongs to the gamma-glutamyl phosphate reductase family.

The protein localises to the cytoplasm. It catalyses the reaction L-glutamate 5-semialdehyde + phosphate + NADP(+) = L-glutamyl 5-phosphate + NADPH + H(+). Its pathway is amino-acid biosynthesis; L-proline biosynthesis; L-glutamate 5-semialdehyde from L-glutamate: step 2/2. In terms of biological role, catalyzes the NADPH-dependent reduction of L-glutamate 5-phosphate into L-glutamate 5-semialdehyde and phosphate. The product spontaneously undergoes cyclization to form 1-pyrroline-5-carboxylate. The polypeptide is Gamma-glutamyl phosphate reductase (Methanosarcina barkeri (strain Fusaro / DSM 804)).